The chain runs to 187 residues: Orotate phosphoribosyltransferase (187 aa).

5-phospho-alpha-D-ribose 1-diphosphate is bound by residues R99, K100, K103, H105, and 125-133 (DDVITTGGS). Residues T129 and R157 each contribute to the orotate site.

This sequence belongs to the purine/pyrimidine phosphoribosyltransferase family. PyrE subfamily. As to quaternary structure, homodimer. The cofactor is Mg(2+).

The enzyme catalyses orotidine 5'-phosphate + diphosphate = orotate + 5-phospho-alpha-D-ribose 1-diphosphate. The protein operates within pyrimidine metabolism; UMP biosynthesis via de novo pathway; UMP from orotate: step 1/2. Catalyzes the transfer of a ribosyl phosphate group from 5-phosphoribose 1-diphosphate to orotate, leading to the formation of orotidine monophosphate (OMP). In Leptospira borgpetersenii serovar Hardjo-bovis (strain L550), this protein is Orotate phosphoribosyltransferase.